The primary structure comprises 427 residues: Tryptophan synthase beta chain 1 (427 aa).

N6-(pyridoxal phosphate)lysine is present on Lys107.

Belongs to the TrpB family. As to quaternary structure, tetramer of two alpha and two beta chains. The cofactor is pyridoxal 5'-phosphate.

It catalyses the reaction (1S,2R)-1-C-(indol-3-yl)glycerol 3-phosphate + L-serine = D-glyceraldehyde 3-phosphate + L-tryptophan + H2O. The protein operates within amino-acid biosynthesis; L-tryptophan biosynthesis; L-tryptophan from chorismate: step 5/5. The beta subunit is responsible for the synthesis of L-tryptophan from indole and L-serine. In Aeropyrum pernix (strain ATCC 700893 / DSM 11879 / JCM 9820 / NBRC 100138 / K1), this protein is Tryptophan synthase beta chain 1 (trpB1).